The chain runs to 149 residues: Nucleoside diphosphate kinase (149 aa).

Residues lysine 9, phenylalanine 57, arginine 85, threonine 91, arginine 102, and asparagine 112 each coordinate ATP. Histidine 115 serves as the catalytic Pros-phosphohistidine intermediate.

Belongs to the NDK family. In terms of assembly, homotetramer. Mg(2+) serves as cofactor.

It is found in the cytoplasm. The enzyme catalyses a 2'-deoxyribonucleoside 5'-diphosphate + ATP = a 2'-deoxyribonucleoside 5'-triphosphate + ADP. It catalyses the reaction a ribonucleoside 5'-diphosphate + ATP = a ribonucleoside 5'-triphosphate + ADP. Major role in the synthesis of nucleoside triphosphates other than ATP. The ATP gamma phosphate is transferred to the NDP beta phosphate via a ping-pong mechanism, using a phosphorylated active-site intermediate. This Roseiflexus castenholzii (strain DSM 13941 / HLO8) protein is Nucleoside diphosphate kinase.